We begin with the raw amino-acid sequence, 395 residues long: tRNA-specific 2-thiouridylase MnmA (395 aa).

ATP is bound by residues 6-13 (AMSGGVDS) and L32. C101 (nucleophile) is an active-site residue. A disulfide bridge connects residues C101 and C193. Position 125 (G125) interacts with ATP. The interaction with tRNA stretch occupies residues 143-145 (KDQ). Residue C193 is the Cysteine persulfide intermediate of the active site.

Belongs to the MnmA/TRMU family.

It localises to the cytoplasm. It catalyses the reaction S-sulfanyl-L-cysteinyl-[protein] + uridine(34) in tRNA + AH2 + ATP = 2-thiouridine(34) in tRNA + L-cysteinyl-[protein] + A + AMP + diphosphate + H(+). Catalyzes the 2-thiolation of uridine at the wobble position (U34) of tRNA, leading to the formation of s(2)U34. The protein is tRNA-specific 2-thiouridylase MnmA of Corynebacterium jeikeium (strain K411).